Here is a 223-residue protein sequence, read N- to C-terminus: RNA-free ribonuclease P (223 aa).

It belongs to the HARP family.

It catalyses the reaction Endonucleolytic cleavage of RNA, removing 5'-extranucleotides from tRNA precursor.. Functionally, RNA-free RNase P that catalyzes the removal of the 5'-leader sequence from pre-tRNA to produce the mature 5'-terminus. In Methanococcus vannielii (strain ATCC 35089 / DSM 1224 / JCM 13029 / OCM 148 / SB), this protein is RNA-free ribonuclease P.